The following is a 129-amino-acid chain: UPF0212 protein MA_1372 (129 aa).

It belongs to the UPF0212 family.

The polypeptide is UPF0212 protein MA_1372 (Methanosarcina acetivorans (strain ATCC 35395 / DSM 2834 / JCM 12185 / C2A)).